The following is a 65-amino-acid chain: Small ribosomal subunit protein eS27 (65 aa).

Residues C20, C23, C39, and C42 each coordinate Zn(2+). A C4-type zinc finger spans residues 20-42; it reads CIDCGNEQIVFSHPATKVRCLVC.

This sequence belongs to the eukaryotic ribosomal protein eS27 family. Part of the 30S ribosomal subunit. Zn(2+) is required as a cofactor.

The chain is Small ribosomal subunit protein eS27 from Thermococcus gammatolerans (strain DSM 15229 / JCM 11827 / EJ3).